The primary structure comprises 385 residues: Probable thioesterase PNKD (385 aa).

Residues 32 to 58 (KASHNRTRALQSHSSPEGKEEPEPLSP) are disordered. 7 residues coordinate Zn(2+): His-172, His-174, Asp-176, His-177, His-229, Asp-253, and His-291.

This sequence belongs to the metallo-beta-lactamase superfamily. Glyoxalase II family. In terms of assembly, isoform 2 interacts with the sarcomeric proteins, MRLC2, MYOM1 and ENO3. The cofactor is Zn(2+). Post-translationally, undergoes cleavage at the N-terminus. In terms of tissue distribution, isoform 1 is only expressed in the brain. Isoform 2 is ubiquitously detected with highest expression in skeletal muscle and detected in myocardial myofibrils.

The protein resides in the cell membrane. The protein localises to the mitochondrion. It is found in the cytoplasm. Its subcellular location is the golgi apparatus. It localises to the endoplasmic reticulum. The enzyme catalyses a thioester + H2O = a thiol + a carboxylate + H(+). Its function is as follows. Probable thioesterase that may play a role in cellular detoxification processes; it likely acts on a yet-unknown alpha-hydroxythioester substrate. In vitro, it is able to catalyze the hydrolysis of S-D-lactoyl-glutathione to form glutathione and D-lactic acid at very low rate, though this reaction is not physiologically relevant in vivo. In Homo sapiens (Human), this protein is Probable thioesterase PNKD (PNKD).